We begin with the raw amino-acid sequence, 349 residues long: MNGTEGKNFYVPMSNRTGLVRSPFEYPQYYLAEPWQFKILALYLFFLMSMGLPINGLTLVVTAQHKKLRQPLNFILVNLAVAGTIMVCFGFTVTFYTAINGYFVLGPTGCAVEGFMATLGGEVALWSLVVLAIERYIVVCKPMGSFKFSSSHAFAGIAFTWVMALACAAPPLFGWSRYIPEGMQCSCGPDYYTLNPDYNNESYVIYMFVCHFILPVAVIFFTYGRLVCTVKAAAAQQQDSASTQKAEREVTKMVILMVFGFLIAWTPYATVAAWIFFNKGADFSAKFMAIPAFFSKSSALYNPVIYVLLNKQFRNCMLTTIFCGKNPLGDDESSTVSTSKTEVSSVSPA.

Topologically, residues 1-36 (MNGTEGKNFYVPMSNRTGLVRSPFEYPQYYLAEPWQ) are extracellular. 2 N-linked (GlcNAc...) asparagine glycosylation sites follow: Asn-2 and Asn-15. A helical transmembrane segment spans residues 37–61 (FKILALYLFFLMSMGLPINGLTLVV). Topologically, residues 62-73 (TAQHKKLRQPLN) are cytoplasmic. Residues 74 to 99 (FILVNLAVAGTIMVCFGFTVTFYTAI) form a helical membrane-spanning segment. Topologically, residues 100–113 (NGYFVLGPTGCAVE) are extracellular. Cys-110 and Cys-187 are disulfide-bonded. Residues 114-133 (GFMATLGGEVALWSLVVLAI) traverse the membrane as a helical segment. Over 134 to 152 (ERYIVVCKPMGSFKFSSSH) the chain is Cytoplasmic. Residues 153–176 (AFAGIAFTWVMALACAAPPLFGWS) form a helical membrane-spanning segment. Over 177–202 (RYIPEGMQCSCGPDYYTLNPDYNNES) the chain is Extracellular. A helical membrane pass occupies residues 203–230 (YVIYMFVCHFILPVAVIFFTYGRLVCTV). At 231 to 252 (KAAAAQQQDSASTQKAEREVTK) the chain is on the cytoplasmic side. The helical transmembrane segment at 253–276 (MVILMVFGFLIAWTPYATVAAWIF) threads the bilayer. Over 277–284 (FNKGADFS) the chain is Extracellular. Residues 285–309 (AKFMAIPAFFSKSSALYNPVIYVLL) traverse the membrane as a helical segment. N6-(retinylidene)lysine is present on Lys-296. The Cytoplasmic segment spans residues 310 to 349 (NKQFRNCMLTTIFCGKNPLGDDESSTVSTSKTEVSSVSPA). The segment at 329–349 (GDDESSTVSTSKTEVSSVSPA) is disordered. Residues 334–349 (STVSTSKTEVSSVSPA) show a composition bias toward low complexity.

The protein belongs to the G-protein coupled receptor 1 family. Opsin subfamily. In terms of processing, phosphorylated on some or all of the serine and threonine residues present in the C-terminal region. The color pigments are found in the cone photoreceptor cells.

The protein resides in the membrane. Visual pigments are the light-absorbing molecules that mediate vision. They consist of an apoprotein, opsin, covalently linked to cis-retinal. In Carassius auratus (Goldfish), this protein is Green-sensitive opsin-1.